A 155-amino-acid chain; its full sequence is UPF0178 protein ACICU_02858 (155 aa).

Residues 120–155 (GAGVQTGGPPPISERDKREFSSALDQTILKQKRKTA) are disordered.

Belongs to the UPF0178 family.

In Acinetobacter baumannii (strain ACICU), this protein is UPF0178 protein ACICU_02858.